The chain runs to 118 residues: Small ribosomal subunit protein uS13 (118 aa).

Residues 91 to 118 (HRRGLPVRGQRTKTNARTRKGPRKPIKK) form a disordered region.

It belongs to the universal ribosomal protein uS13 family. Part of the 30S ribosomal subunit. Forms a loose heterodimer with protein S19. Forms two bridges to the 50S subunit in the 70S ribosome.

Functionally, located at the top of the head of the 30S subunit, it contacts several helices of the 16S rRNA. In the 70S ribosome it contacts the 23S rRNA (bridge B1a) and protein L5 of the 50S subunit (bridge B1b), connecting the 2 subunits; these bridges are implicated in subunit movement. Contacts the tRNAs in the A and P-sites. In Serratia proteamaculans (strain 568), this protein is Small ribosomal subunit protein uS13.